A 361-amino-acid polypeptide reads, in one-letter code: Divinyl chlorophyll a/b light-harvesting protein PcbE (361 aa).

Helical transmembrane passes span phenylalanine 27–leucine 47, valine 88–leucine 108, phenylalanine 149–alanine 169, valine 210–alanine 230, alanine 250–cysteine 270, and leucine 315–isoleucine 335.

The protein belongs to the PsbB/PsbC family. IsiA/Pcb subfamily. As to quaternary structure, the antenna complex consists of divinyl chlorophylls (a and b) and divinyl chlorophyll a/b binding proteins and binds more divinyl chlorophyll b than does the antenna complex from high-light-adapted Prochlorococcus. Requires divinyl chlorophyll a as cofactor. Divinyl chlorophyll b serves as cofactor.

Its subcellular location is the cellular thylakoid membrane. In terms of biological role, the antenna complex functions as a light receptor, it captures and delivers excitation energy to photosystems II and I. The Prochlorales pcb genes are not related to higher plant LHCs. This chain is Divinyl chlorophyll a/b light-harvesting protein PcbE (pcbE), found in Prochlorococcus marinus (strain SARG / CCMP1375 / SS120).